The primary structure comprises 488 residues: Arginine biosynthesis bifunctional protein ArgJ, mitochondrial (488 aa).

Substrate is bound by residues Thr-227, Lys-250, Thr-261, Glu-340, Asn-483, and Ser-488. Thr-261 (nucleophile) is an active-site residue.

The protein belongs to the ArgJ family. In terms of assembly, heterodimer of an alpha and a beta chain. Post-translationally, the alpha and beta chains are autoproteolytically processed from a single precursor protein within the mitochondrion.

The protein localises to the mitochondrion matrix. It carries out the reaction N(2)-acetyl-L-ornithine + L-glutamate = N-acetyl-L-glutamate + L-ornithine. The catalysed reaction is L-glutamate + acetyl-CoA = N-acetyl-L-glutamate + CoA + H(+). It participates in amino-acid biosynthesis; L-arginine biosynthesis; L-ornithine and N-acetyl-L-glutamate from L-glutamate and N(2)-acetyl-L-ornithine (cyclic): step 1/1. It functions in the pathway amino-acid biosynthesis; L-arginine biosynthesis; N(2)-acetyl-L-ornithine from L-glutamate: step 1/4. In terms of biological role, catalyzes two activities which are involved in the cyclic version of arginine biosynthesis: the synthesis of acetylglutamate from glutamate and acetyl-CoA, and of ornithine by transacetylation between acetylornithine and glutamate. The polypeptide is Arginine biosynthesis bifunctional protein ArgJ, mitochondrial (Thalassiosira pseudonana (Marine diatom)).